The sequence spans 429 residues: DNA polymerase delta small subunit (429 aa).

Belongs to the DNA polymerase delta/II small subunit family. In terms of assembly, heterodimer with subunits of 125 kDa and 50 kDa.

The protein localises to the nucleus. The catalysed reaction is DNA(n) + a 2'-deoxyribonucleoside 5'-triphosphate = DNA(n+1) + diphosphate. The function of the small subunit is not yet clear. This is DNA polymerase delta small subunit (POLD2) from Oryza sativa subsp. japonica (Rice).